Reading from the N-terminus, the 562-residue chain is NAD-dependent malic enzyme (562 aa).

Tyr-101 serves as the catalytic Proton donor. Residue Arg-154 participates in NAD(+) binding. The active-site Proton acceptor is the Lys-172. Glu-243, Asp-244, and Asp-267 together coordinate a divalent metal cation. NAD(+)-binding residues include Asp-267 and Asn-415.

This sequence belongs to the malic enzymes family. As to quaternary structure, homotetramer. Mg(2+) serves as cofactor. It depends on Mn(2+) as a cofactor.

The enzyme catalyses (S)-malate + NAD(+) = pyruvate + CO2 + NADH. The catalysed reaction is oxaloacetate + H(+) = pyruvate + CO2. The protein is NAD-dependent malic enzyme of Shewanella woodyi (strain ATCC 51908 / MS32).